The following is a 517-amino-acid chain: MTKNIHDQRILILDFGSQYTQLVARRVREIGVYCELWSWDVEEADIREFNPDGIILSGGPESVTEANSPRAPQYVFDSGVPVFGVCYGMQTMAEQLGGRVATSDEREFGYAQVKISGESALFKDLDLTQDVWMSHGDKVVEIPADFVKIGETDTCPYAAMANEEKKYYGVQFHPEVTHTKNGLQMLENFVLGVCGCERLWTSESIIEDAVARIKEQVGNDEVILGLSGGVDSSVVAMLVHRAIGSKLTCVFVDNGLLRLNEGEQVMEMFGDKFGLNIIKVDAEERFLKALEGIDEPEAKRKTIGRVFVEVFDEESKKLSNAKWLAQGTIYPDVIESAASKTGKAHVIKSHHNVGGLPDDMKMGLVEPLRELFKDEVRKIGLELGLPYNMLYRHPFPGPGLGVRVLGEVKKEYCDLLRRADAIFIEELHAADLYNKVSQAFTVFLPVRSVGVMGDGRKYDWVVSLRAVETIDFMTAHWAHLPYEFLGKVSNRIINEVNGISRVVYDISGKPPATIEWE.

The region spanning 9-199 (RILILDFGSQ…VLGVCGCERL (191 aa)) is the Glutamine amidotransferase type-1 domain. Cys-86 serves as the catalytic Nucleophile. Active-site residues include His-173 and Glu-175. In terms of domain architecture, GMPS ATP-PPase spans 200-392 (WTSESIIEDA…LGLPYNMLYR (193 aa)). An ATP-binding site is contributed by 227 to 233 (SGGVDSS).

Homodimer.

The catalysed reaction is XMP + L-glutamine + ATP + H2O = GMP + L-glutamate + AMP + diphosphate + 2 H(+). It functions in the pathway purine metabolism; GMP biosynthesis; GMP from XMP (L-Gln route): step 1/1. Its function is as follows. Catalyzes the synthesis of GMP from XMP. This Vibrio cholerae serotype O1 (strain ATCC 39541 / Classical Ogawa 395 / O395) protein is GMP synthase [glutamine-hydrolyzing].